An 822-amino-acid chain; its full sequence is Structure-specific endonuclease subunit SLX4 (822 aa).

6 disordered regions span residues 1 to 39 (MSHL…PSAS), 73 to 117 (TPAV…PRPL), 277 to 362 (GTTN…GVSD), 390 to 418 (RVSS…TSVS), 456 to 507 (KSHE…SGQL), and 589 to 676 (KNSA…QASS). Residues 13-39 (SPSPSQIFGSSTTPVATNSTHSEPSAS) are compositionally biased toward polar residues. Residues 280–294 (NSSSSEGSSNKSSGK) show a composition bias toward low complexity. A compositionally biased stretch (polar residues) spans 310–320 (VTTITSLSTAQ). Residues 342–354 (GKRSKSQTKKGGN) show a composition bias toward basic residues. Over residues 460-470 (SSTLTLPSTST) the composition is skewed to low complexity. The span at 471–484 (NASNQGFSSQNTIN) shows a compositional bias: polar residues. Positions 490-506 (SQTTSTTTESTGVESGQ) are enriched in low complexity. Residues 589–612 (KNSAPTSLPANNANPPDSHASGQK) show a composition bias toward polar residues. Over residues 627 to 636 (TTKRASKAPQ) the composition is skewed to basic residues. Low complexity predominate over residues 637-650 (KKQSTSSTSHSAKA).

Belongs to the SLX4 family. In terms of assembly, forms a heterodimer with SLX1. Post-translationally, phosphorylated in response to DNA damage.

Its subcellular location is the nucleus. Functionally, regulatory subunit of the SLX1-SLX4 structure-specific endonuclease that resolves DNA secondary structures generated during DNA repair and recombination. Has endonuclease activity towards branched DNA substrates, introducing single-strand cuts in duplex DNA close to junctions with ss-DNA. The sequence is that of Structure-specific endonuclease subunit SLX4 from Coccidioides immitis (strain RS) (Valley fever fungus).